Consider the following 660-residue polypeptide: tRNA 5-methylaminomethyl-2-thiouridine biosynthesis bifunctional protein MnmC (660 aa).

The interval 1–242 is tRNA (mnm(5)s(2)U34)-methyltransferase; that stretch reads MTDRIVPATL…KRAMLVGEFA (242 aa). Positions 266–660 are FAD-dependent cmnm(5)s(2)U34 oxidoreductase; it reads IGAGLAGCAV…VRALRHGRVA (395 aa).

The protein in the N-terminal section; belongs to the methyltransferase superfamily. tRNA (mnm(5)s(2)U34)-methyltransferase family. It in the C-terminal section; belongs to the DAO family. FAD is required as a cofactor.

The protein resides in the cytoplasm. The catalysed reaction is 5-aminomethyl-2-thiouridine(34) in tRNA + S-adenosyl-L-methionine = 5-methylaminomethyl-2-thiouridine(34) in tRNA + S-adenosyl-L-homocysteine + H(+). Its function is as follows. Catalyzes the last two steps in the biosynthesis of 5-methylaminomethyl-2-thiouridine (mnm(5)s(2)U) at the wobble position (U34) in tRNA. Catalyzes the FAD-dependent demodification of cmnm(5)s(2)U34 to nm(5)s(2)U34, followed by the transfer of a methyl group from S-adenosyl-L-methionine to nm(5)s(2)U34, to form mnm(5)s(2)U34. This is tRNA 5-methylaminomethyl-2-thiouridine biosynthesis bifunctional protein MnmC from Burkholderia pseudomallei (strain 1106a).